The chain runs to 285 residues: NADPH-dependent 7-cyano-7-deazaguanine reductase (285 aa).

Position 91–93 (91–93 (IES)) interacts with substrate. Residue 93 to 94 (SK) coordinates NADPH. The active-site Thioimide intermediate is C191. Residue D198 is the Proton donor of the active site. 230–231 (HE) lines the substrate pocket. Position 259–260 (259–260 (RG)) interacts with NADPH.

Belongs to the GTP cyclohydrolase I family. QueF type 2 subfamily. In terms of assembly, homodimer.

It localises to the cytoplasm. It carries out the reaction 7-aminomethyl-7-carbaguanine + 2 NADP(+) = 7-cyano-7-deazaguanine + 2 NADPH + 3 H(+). The protein operates within tRNA modification; tRNA-queuosine biosynthesis. Catalyzes the NADPH-dependent reduction of 7-cyano-7-deazaguanine (preQ0) to 7-aminomethyl-7-deazaguanine (preQ1). The chain is NADPH-dependent 7-cyano-7-deazaguanine reductase from Legionella pneumophila (strain Corby).